Consider the following 1072-residue polypeptide: Carbamoyl phosphate synthase large chain (1072 aa).

The tract at residues 1–401 is carboxyphosphate synthetic domain; that stretch reads MPKRLDINTI…SLLKAVRSLE (401 aa). Arg-129, Arg-169, Gly-175, Gly-176, Lys-208, Ile-210, Glu-215, Gly-241, Val-242, His-243, Gln-284, and Glu-298 together coordinate ATP. The ATP-grasp 1 domain occupies 133–327; that stretch reads RTLMQELNEP…IAKLAAKIAV (195 aa). Mg(2+) contacts are provided by Gln-284, Glu-298, and Asn-300. Positions 284, 298, and 300 each coordinate Mn(2+). The tract at residues 402 to 546 is oligomerization domain; it reads LGVYHLELEH…YSTYGDENES (145 aa). The carbamoyl phosphate synthetic domain stretch occupies residues 547–929; the sequence is VRTDRKSVVV…ALYKGLVASG (383 aa). The ATP-grasp 2 domain maps to 671–861; sequence EAALTQLGIP…MANVATKVIL (191 aa). Positions 707, 746, 752, 777, 778, 779, 780, 820, and 832 each coordinate ATP. Residues Gln-820, Glu-832, and Asn-834 each contribute to the Mg(2+) site. Residues Gln-820, Glu-832, and Asn-834 each coordinate Mn(2+). The region spanning 930 to 1072 is the MGS-like domain; that stretch reads INIPTHGSVI…QTKRHEVVHA (143 aa). Residues 930 to 1072 are allosteric domain; it reads INIPTHGSVI…QTKRHEVVHA (143 aa).

This sequence belongs to the CarB family. Composed of two chains; the small (or glutamine) chain promotes the hydrolysis of glutamine to ammonia, which is used by the large (or ammonia) chain to synthesize carbamoyl phosphate. Tetramer of heterodimers (alpha,beta)4. Mg(2+) is required as a cofactor. Requires Mn(2+) as cofactor.

It catalyses the reaction hydrogencarbonate + L-glutamine + 2 ATP + H2O = carbamoyl phosphate + L-glutamate + 2 ADP + phosphate + 2 H(+). The enzyme catalyses hydrogencarbonate + NH4(+) + 2 ATP = carbamoyl phosphate + 2 ADP + phosphate + 2 H(+). It functions in the pathway amino-acid biosynthesis; L-arginine biosynthesis; carbamoyl phosphate from bicarbonate: step 1/1. It participates in pyrimidine metabolism; UMP biosynthesis via de novo pathway; (S)-dihydroorotate from bicarbonate: step 1/3. In terms of biological role, large subunit of the glutamine-dependent carbamoyl phosphate synthetase (CPSase). CPSase catalyzes the formation of carbamoyl phosphate from the ammonia moiety of glutamine, carbonate, and phosphate donated by ATP, constituting the first step of 2 biosynthetic pathways, one leading to arginine and/or urea and the other to pyrimidine nucleotides. The large subunit (synthetase) binds the substrates ammonia (free or transferred from glutamine from the small subunit), hydrogencarbonate and ATP and carries out an ATP-coupled ligase reaction, activating hydrogencarbonate by forming carboxy phosphate which reacts with ammonia to form carbamoyl phosphate. The chain is Carbamoyl phosphate synthase large chain from Bacillus cereus (strain G9842).